A 207-amino-acid chain; its full sequence is Small ribosomal subunit protein uS4c (207 aa).

Residues 92–156 enclose the S4 RNA-binding domain; that stretch reads MRLDNILFRL…YQSIITKRIE (65 aa).

Belongs to the universal ribosomal protein uS4 family. As to quaternary structure, part of the 30S ribosomal subunit. Contacts protein S5. The interaction surface between S4 and S5 is involved in control of translational fidelity.

It is found in the plastid. The protein localises to the chloroplast. Its function is as follows. One of the primary rRNA binding proteins, it binds directly to 16S rRNA where it nucleates assembly of the body of the 30S subunit. Functionally, with S5 and S12 plays an important role in translational accuracy. This Equisetum arvense (Field horsetail) protein is Small ribosomal subunit protein uS4c (rps4).